A 324-amino-acid chain; its full sequence is Cuticle collagen sqt-1 (324 aa).

Disordered regions lie at residues 68–108 (RRQY…TPNG) and 129–324 (SGPK…YRNI). The segment covering 87-97 (SAPPGQPPAVP) has biased composition (pro residues). Triple-helical region stretches follow at residues 127–153 (GPSG…PGVG), 171–231 (QGPV…KGRD), and 237–299 (GRPG…PGKD). Composition is skewed to low complexity over residues 129 to 156 (SGPK…GADD) and 177 to 201 (PGAL…PGRD). The span at 227–236 (EKGRDAEHPI) shows a compositional bias: basic and acidic residues.

It belongs to the cuticular collagen family. In terms of assembly, collagen polypeptide chains are complexed within the cuticle by disulfide bonds and other types of covalent cross-links.

Nematode cuticles are composed largely of collagen-like proteins. The cuticle functions both as an exoskeleton and as a barrier to protect the worm from its environment. This is a collagen critical for organismal morphogenesis. Mutations in sqt-1 can lengthen, shorten, or helically twist the entire animal. The protein is Cuticle collagen sqt-1 (sqt-1) of Caenorhabditis elegans.